We begin with the raw amino-acid sequence, 105 residues long: ELVSEFCLKKERVCEDSSLTISCPEGEGIVIYDAIYGRKRGEVCPGLFGAFTKNRKCRSSNSQQVVENSCEGKSSCTVLASNSVFGDPCPGTAKYLAVTYICSFL.

Residues 13-103 (VCEDSSLTIS…KYLAVTYICS (91 aa)) form the SUEL-type lectin domain.

In terms of assembly, homodimer; disulfide-linked.

It is found in the cytoplasm. This protein binds D-galactoside. May have an important role in the activation of eggs (triggered by fertilization), or in their subsequent differentiation. The dimeric form is essential for hemagglutination activity. In Heliocidaris crassispina (Sea urchin), this protein is D-galactoside-specific lectin.